A 495-amino-acid chain; its full sequence is Cysteine--tRNA ligase (495 aa).

Residue C29 participates in Zn(2+) binding. A 'HIGH' region motif is present at residues 31 to 41; it reads VTVYDDSHVGH. Zn(2+) is bound by residues C209, H234, and E238. The short motif at 266–270 is the 'KMSKS' region element; sequence KMSKS. K269 lines the ATP pocket.

Belongs to the class-I aminoacyl-tRNA synthetase family. In terms of assembly, monomer. Zn(2+) is required as a cofactor.

The protein localises to the cytoplasm. It catalyses the reaction tRNA(Cys) + L-cysteine + ATP = L-cysteinyl-tRNA(Cys) + AMP + diphosphate. This is Cysteine--tRNA ligase (cysS) from Aquifex aeolicus (strain VF5).